Here is a 137-residue protein sequence, read N- to C-terminus: Ig heavy chain V region MOPC 315 (137 aa).

Residues 1–18 (MKVLSLLYLLTAIPGIMS) form the signal peptide. The interval 19–48 (DVQLQESGPGLVKPSQSLSLTCSVTGYSIT) is framework-1. An intrachain disulfide couples cysteine 40 to cysteine 114. The complementarity-determining-1 stretch occupies residues 49–54 (SGYFWN). The segment at 55-68 (WIRQFPGNKLEWLG) is framework-2. Residues 69 to 84 (FIKYDGSNGYNPSLKN) form a complementarity-determining-2 region. The interval 85-116 (RVSITRDTSENQFFLKLNSVTTEDTATYYCAG) is framework-3. The segment at 117-126 (DNDHLYYFDY) is complementarity-determining-3. A framework-4 region spans residues 127–137 (WGQGTTLTVSS).

In Mus musculus (Mouse), this protein is Ig heavy chain V region MOPC 315.